We begin with the raw amino-acid sequence, 514 residues long: Serine--tRNA ligase, cytoplasmic (514 aa).

The residue at position 1 (Met1) is an N-acetylmethionine. The interaction with tRNA stretch occupies residues 9-61 (RVDKGGDPALIRETQEKRFKDPGLVDQLVKADSEWRRCRFRADNLNKLKNLCS). The residue at position 241 (Ser241) is a Phosphoserine. Residues Thr271 and Arg302 each contribute to the L-serine site. Residues 302–304 (RQE) and 318–321 (VHQF) contribute to the ATP site. Lys323 carries the post-translational modification N6-acetyllysine. Glu325 contacts L-serine. 391-394 (ELVS) serves as a coordination point for ATP. Asn427 contributes to the L-serine binding site. Residues 473–514 (PAPIEQEPSKKQKKQHEGSKKKAAARDVTLENRLQNMEVTDA) form a disordered region. A compositionally biased stretch (basic and acidic residues) spans 479 to 502 (EPSKKQKKQHEGSKKKAAARDVTL). The short motif at 482–494 (KKQKKQHEGSKKK) is the Nuclear localization signal element. Over residues 504-514 (NRLQNMEVTDA) the composition is skewed to polar residues.

The protein belongs to the class-II aminoacyl-tRNA synthetase family. Type-1 seryl-tRNA synthetase subfamily. As to quaternary structure, homodimer. The tRNA molecule may bind across the dimer. Interacts with SIRT2. Interacts with METTL6; interaction is required for the tRNA N(3)-methylcytidine methyltransferase activity of METTL6. As to expression, brain.

It localises to the cytoplasm. The protein resides in the nucleus. It catalyses the reaction tRNA(Ser) + L-serine + ATP = L-seryl-tRNA(Ser) + AMP + diphosphate + H(+). It carries out the reaction tRNA(Sec) + L-serine + ATP = L-seryl-tRNA(Sec) + AMP + diphosphate + H(+). It functions in the pathway aminoacyl-tRNA biosynthesis; selenocysteinyl-tRNA(Sec) biosynthesis; L-seryl-tRNA(Sec) from L-serine and tRNA(Sec): step 1/1. Catalyzes the attachment of serine to tRNA(Ser) in a two-step reaction: serine is first activated by ATP to form Ser-AMP and then transferred to the acceptor end of tRNA(Ser). Is probably also able to aminoacylate tRNA(Sec) with serine, to form the misacylated tRNA L-seryl-tRNA(Sec), which will be further converted into selenocysteinyl-tRNA(Sec). In the nucleus, binds to the VEGFA core promoter and prevents MYC binding and transcriptional activation by MYC. Recruits SIRT2 to the VEGFA promoter, promoting deacetylation of histone H4 at 'Lys-16' (H4K16). Thereby, inhibits the production of VEGFA and sprouting angiogenesis mediated by VEGFA. In Homo sapiens (Human), this protein is Serine--tRNA ligase, cytoplasmic.